The chain runs to 173 residues: Cytochrome c-type biogenesis protein CcmE (173 aa).

The Cytoplasmic segment spans residues 1–8 (MNPRRKSR). Residues 9-29 (FKLVIFVVLGIAIASGLMLYA) form a helical; Signal-anchor for type II membrane protein membrane-spanning segment. The Periplasmic portion of the chain corresponds to 30–173 (LRQNIDLFYT…RDRQEKEGAK (144 aa)). The heme site is built by His131 and Tyr135. Residues 152-173 (GIEAADLKGESARDRQEKEGAK) form a disordered region. Basic and acidic residues predominate over residues 156–173 (ADLKGESARDRQEKEGAK).

Belongs to the CcmE/CycJ family.

It localises to the cell inner membrane. Functionally, heme chaperone required for the biogenesis of c-type cytochromes. Transiently binds heme delivered by CcmC and transfers the heme to apo-cytochromes in a process facilitated by CcmF and CcmH. This is Cytochrome c-type biogenesis protein CcmE from Haemophilus influenzae (strain ATCC 51907 / DSM 11121 / KW20 / Rd).